Consider the following 126-residue polypeptide: Aspartate 1-decarboxylase (126 aa).

Residue Ser25 is the Schiff-base intermediate with substrate; via pyruvic acid of the active site. Ser25 is subject to Pyruvic acid (Ser). Thr57 provides a ligand contact to substrate. The active-site Proton donor is the Tyr58. 73–75 (GAA) provides a ligand contact to substrate.

This sequence belongs to the PanD family. Heterooctamer of four alpha and four beta subunits. Pyruvate is required as a cofactor. Is synthesized initially as an inactive proenzyme, which is activated by self-cleavage at a specific serine bond to produce a beta-subunit with a hydroxyl group at its C-terminus and an alpha-subunit with a pyruvoyl group at its N-terminus.

It is found in the cytoplasm. The catalysed reaction is L-aspartate + H(+) = beta-alanine + CO2. Its pathway is cofactor biosynthesis; (R)-pantothenate biosynthesis; beta-alanine from L-aspartate: step 1/1. Catalyzes the pyruvoyl-dependent decarboxylation of aspartate to produce beta-alanine. The chain is Aspartate 1-decarboxylase from Pseudomonas fluorescens.